Reading from the N-terminus, the 69-residue chain is Beta-defensin 43 (69 aa).

Residues 1–22 (MRVLFSILGVLTLLSIVPLARS) form the signal peptide. 2 disulfide bridges follow: C29-C56 and C35-C49.

Belongs to the beta-defensin family.

Its subcellular location is the secreted. Has bactericidal activity. The chain is Beta-defensin 43 (Defb43) from Mus musculus (Mouse).